The following is a 411-amino-acid chain: Lissencephaly-1 homolog (411 aa).

Residues 9-41 enclose the LisH domain; the sequence is QREELNQAIADYLGSNGYGDSLETFRKEADVST. Positions 56–83 form a coiled coil; it reads TSVIRLQKKVMELEAKLTEAEKEVIEGA. WD repeat units follow at residues 106–147, 148–187, 191–230, 233–272, 275–334, 337–376, and 379–411; these read GHRA…RSLK, GHTDSVQDVAFDSQGKLLASCSADLSIKLWDFQQSYECVK, GHDHNVSSVAFVPAGDYVLSASRDRTIKMWEVATGYCVKT, GHREWVRMVRVHIEGSIFATCSNDHTIRVWLMNSKDCKVE, DHEH…CLLT, GHDNWVRGLAFHPGGKYLVSASDDKTIRVWDLRNKRCMKT, and AHQHFCTSIDFHKAHPYVISGSVDQTVKVWECR.

Belongs to the WD repeat LIS1/nudF family.

The protein resides in the cytoplasm. Its subcellular location is the cytoskeleton. It localises to the microtubule organizing center. It is found in the centrosome. Functionally, positively regulates the activity of the minus-end directed microtubule motor protein dynein. May enhance dynein-mediated microtubule sliding by targeting dynein to the microtubule plus end. Required for several dynein- and microtubule-dependent processes. The protein is Lissencephaly-1 homolog of Drosophila persimilis (Fruit fly).